Reading from the N-terminus, the 466-residue chain is Tissue alpha-L-fucosidase (466 aa).

A signal peptide spans methionine 1 to alanine 31. Position 170 is a phosphothreonine (threonine 170). Asparagine 241, asparagine 268, and asparagine 382 each carry an N-linked (GlcNAc...) asparagine glycan.

Belongs to the glycosyl hydrolase 29 family. As to quaternary structure, homotetramer.

The protein resides in the lysosome. It carries out the reaction an alpha-L-fucoside + H2O = L-fucose + an alcohol. The catalysed reaction is a neolactoside IV(2)-alpha-Fuc-nLc4Cer(d18:1(4E)) + H2O = a neolactoside nLc4Cer(d18:1(4E)) + L-fucose. It catalyses the reaction a neolactoside IV(2)-alpha-Fuc-nLc4Cer(d18:0) + H2O = a neolactoside nLc4Cer(d18:0) + L-fucose. Alpha-L-fucosidase is responsible for hydrolyzing the alpha-1,6-linked fucose joined to the reducing-end N-acetylglucosamine of the carbohydrate moieties of glycoproteins. In Homo sapiens (Human), this protein is Tissue alpha-L-fucosidase.